The following is a 121-amino-acid chain: Flagellar protein FliT (121 aa).

Residues 1-50 (MNHAPHLYFAWQQLVEKSQLMLRLATEEQWDELIASEMAYVNAVQEIAHL) are required for homodimerization. Residues 60 to 98 (MQEQLRPMLRLILDNESKVKQLLQIRMDELAKLVGQSSV) are fliD binding.

It belongs to the FliT family. Homodimer. Interacts with FliD and FlhC.

It localises to the cytoplasm. Its subcellular location is the cytosol. Its function is as follows. Dual-function protein that regulates the transcription of class 2 flagellar operons and that also acts as an export chaperone for the filament-capping protein FliD. As a transcriptional regulator, acts as an anti-FlhDC factor; it directly binds FlhC, thus inhibiting the binding of the FlhC/FlhD complex to class 2 promoters, resulting in decreased expression of class 2 flagellar operons. As a chaperone, effects FliD transition to the membrane by preventing its premature polymerization, and by directing it to the export apparatus. The chain is Flagellar protein FliT from Escherichia coli (strain ATCC 8739 / DSM 1576 / NBRC 3972 / NCIMB 8545 / WDCM 00012 / Crooks).